We begin with the raw amino-acid sequence, 463 residues long: Glutathione amide reductase (463 aa).

Residues Thr2, Gln3, and His4 each coordinate Ni(2+). FAD is bound by residues 14–15, Glu34, and Thr41; that span reads SG. Cys42 and Cys47 are oxidised to a cystine. Residues Lys50 and 113–114 each bind FAD; that span reads HA. Residue Lys50 participates in NAD(+) binding. NAD(+) is bound by residues 174 to 180, 197 to 198, Val230, and Gly261; these read AGYIGIE and LE. Residues Asp302 and 308-310 each bind FAD; that span reads QLT. NAD(+) is bound by residues Gln308 and Val341. His437 provides a ligand contact to FAD. The active-site Proton acceptor is His437.

This sequence belongs to the class-I pyridine nucleotide-disulfide oxidoreductase family. As to quaternary structure, homodimer. FAD serves as cofactor.

The catalysed reaction is 2 glutathione amide + NAD(+) = glutathione amide disulfide + NADH + H(+). In terms of biological role, catalyzes the reduction of glutathione amide disulfide (GASSAG) to restore glutathione amide (GASH) in the presence of NADH. May play a role in GASH metabolism under anaerobic conditions as a sulfide carrier necessary for cytoplasmic sulfide oxidation. This is Glutathione amide reductase from Marichromatium gracile (Chromatium gracile).